The chain runs to 207 residues: Recombination protein RecR (207 aa).

Residues 60-75 (CRRCHNISDSGVCTIC) form a C4-type zinc finger. Residues 83-178 (STLCVVENIR…RVSVIARGIA (96 aa)) enclose the Toprim domain.

It belongs to the RecR family.

In terms of biological role, may play a role in DNA repair. It seems to be involved in an RecBC-independent recombinational process of DNA repair. It may act with RecF and RecO. This chain is Recombination protein RecR, found in Porphyromonas gingivalis (strain ATCC 33277 / DSM 20709 / CIP 103683 / JCM 12257 / NCTC 11834 / 2561).